Here is a 240-residue protein sequence, read N- to C-terminus: Bidirectional sugar transporter SWEET7c (240 aa).

At 1–12 (MVSPDLIRNVVG) the chain is on the extracellular side. The MtN3/slv 1 domain maps to 10–48 (VVGIVGNVISFGLFLSPVPIFWWIIKNKNVQNFKADPIL). The helical transmembrane segment at 13–33 (IVGNVISFGLFLSPVPIFWWI) threads the bilayer. Over 34 to 46 (IKNKNVQNFKADP) the chain is Cytoplasmic. Residues 47-67 (ILVVTINGISLVIEAVYLTIF) traverse the membrane as a helical segment. The Extracellular portion of the chain corresponds to 68-78 (FLFSDKKNKKK). Residues 79–99 (MGVVLATEALFMAAVAVGVLL) traverse the membrane as a helical segment. Residues 100–108 (GAHTHQRRS) lie on the Cytoplasmic side of the membrane. A helical membrane pass occupies residues 109 to 129 (LIVGILCVIFGTIMYSSPLTI). The 82-residue stretch at 110 to 191 (IVGILCVIFG…LILYAIYYRT (82 aa)) folds into the MtN3/slv 2 domain. Residues 130–140 (MVVKTKSVEYM) lie on the Extracellular side of the membrane. The chain crosses the membrane as a helical span at residues 141-161 (PLLLSVVSFLNGLCWTLYALI). Over 162-164 (RFD) the chain is Cytoplasmic. Residues 165-185 (IFITIPNGLGVLFAIMQLILY) traverse the membrane as a helical segment. Residues 186-240 (AIYYRTTPKKQDKNLELPTVAPIAKDTSIVAPVGNDDDVNGSTASHATINITIEP) lie on the Extracellular side of the membrane. Asn-225 and Asn-235 each carry an N-linked (GlcNAc...) asparagine glycan.

The protein belongs to the SWEET sugar transporter family. Forms homooligomers and/or heterooligomers.

The protein localises to the cell membrane. Mediates both low-affinity uptake and efflux of sugar across the plasma membrane. The protein is Bidirectional sugar transporter SWEET7c (SWEET7C) of Oryza sativa subsp. indica (Rice).